Consider the following 393-residue polypeptide: S-adenosylmethionine synthase (393 aa).

His-16 contacts ATP. Mg(2+) is bound at residue Asp-18. Glu-44 is a binding site for K(+). 2 residues coordinate L-methionine: Glu-57 and Gln-100. The segment at 100–110 (QSNDIAQGVDH) is flexible loop. Residues 167-169 (DAK), 238-239 (RF), Asp-247, 253-254 (RK), Ala-270, and Lys-274 each bind ATP. Asp-247 provides a ligand contact to L-methionine. Residue Lys-278 participates in L-methionine binding.

It belongs to the AdoMet synthase family. Homotetramer; dimer of dimers. It depends on Mg(2+) as a cofactor. The cofactor is K(+).

The protein resides in the cytoplasm. The enzyme catalyses L-methionine + ATP + H2O = S-adenosyl-L-methionine + phosphate + diphosphate. The protein operates within amino-acid biosynthesis; S-adenosyl-L-methionine biosynthesis; S-adenosyl-L-methionine from L-methionine: step 1/1. Functionally, catalyzes the formation of S-adenosylmethionine (AdoMet) from methionine and ATP. The overall synthetic reaction is composed of two sequential steps, AdoMet formation and the subsequent tripolyphosphate hydrolysis which occurs prior to release of AdoMet from the enzyme. This Acidovorax ebreus (strain TPSY) (Diaphorobacter sp. (strain TPSY)) protein is S-adenosylmethionine synthase.